We begin with the raw amino-acid sequence, 566 residues long: Beta-1,4 N-acetylgalactosaminyltransferase 2 (566 aa).

An ER exit and post-Golgi subcellular localization region spans residues 1–22 (MGSAGFSVGKFHVEVASRGREC). Residues 1–67 (MGSAGFSVGK…HGRSRRQGSR (67 aa)) are Cytoplasmic-facing. The short motif at 9 to 15 (GKFHVEV) is the Vesicular targeting element. The chain crosses the membrane as a helical; Signal-anchor for type II membrane protein span at residues 68-88 (FLWLLKILVIILVLGIVGFMF). Topologically, residues 89-566 (GSMFLQAVFS…YFKNHLQCAA (478 aa)) are lumenal.

Belongs to the glycosyltransferase 2 family. As to quaternary structure, homodimer; disulfide-linked. In terms of tissue distribution, widely expressed. Highly expressed in colon and to a lesser extent in kidney, stomach, ileum and rectum.

It localises to the golgi apparatus. The protein localises to the trans-Golgi network membrane. It is found in the cytoplasmic vesicle membrane. It catalyses the reaction an N-acetyl-alpha-neuraminyl-(2-&gt;3)-beta-D-galactosyl derivative + UDP-N-acetyl-alpha-D-galactosamine = an N-acetyl-beta-D-galactosaminyl-(1-&gt;4)-[N-acetyl-alpha-neuraminyl-(2-&gt;3)]-beta-D-galactosyl derivative + UDP + H(+). The enzyme catalyses a 3-O-{alpha-Neu5Ac-(2-&gt;3)-beta-D-Gal-(1-&gt;3)-[alpha-Neu5Ac-(2-&gt;6)]-alpha-D-GalNAc}-L-seryl-[protein] + UDP-N-acetyl-alpha-D-galactosamine = a 3-O-{[alpha-Neu5Ac-(2-&gt;3)]-beta-D-GalNAc-(1-&gt;4)-beta-D-Gal-(1-&gt;3)-[alpha-Neu5Ac-(2-&gt;6)]-alpha-D-GalNAc}-L-seryl-[protein] + UDP + H(+). It carries out the reaction a 3-O-{alpha-Neu5Ac-(2-&gt;3)-beta-D-Gal-(1-&gt;3)-[alpha-Neu5Ac-(2-&gt;6)]-alpha-D-GalNAc}-L-threonyl-[protein] + UDP-N-acetyl-alpha-D-galactosamine = a 3-O-{[alpha-Neu5Ac-(2-&gt;3)]-beta-D-GalNAc-(1-&gt;4)-beta-D-Gal-(1-&gt;3)-[alpha-Neu5Ac-(2-&gt;6)]-alpha-D-GalNAc}-L-threonyl-[protein] + UDP + H(+). The catalysed reaction is a neolactoside IV(3)-alpha-NeuAc-nLc4Cer + UDP-N-acetyl-alpha-D-galactosamine = a neolactoside IV(4)-GalNAc,IV(3)-alpha-NeuAc-nLc4Cer + UDP + H(+). The protein operates within protein modification; protein glycosylation. It participates in glycolipid biosynthesis. Beta-1,4 N-acetylgalactosaminyltransferase involved in the biosynthesis of Sd(a) histo-blood group antigen. Catalyzes the transfer of N-acetylgalactosamine (GalNAc) group in a beta-1,4-linkage from UDP-GalNAc to the galactose residue of NeuAcalpha2-&gt;3Gal-R to form Sd(a) glycan epitope GalNAcbeta1-&gt;4(NeuAcalpha2-&gt;3)Gal-R. The Sd(a) epitope is carried in O- and N-linked glycoproteins and glycolipids, including O-linked core 1 structures on GYPA/glycophorin, SLC4A1 and SLC29A1 in erythrocytes, N-linked glycans attached to the Tamm-Horsfall glycoprotein UMOD/uromodulin in renal fluids, O-linked core 3 glycans on mucins in colon and neolactosides in gastric mucosa. Confers protection against influenza A virus strains that attach to NeuAcalpha2-&gt;3-carrying host receptors. Modifies N-glycan chains on host receptors and prevents virus entry into cells. In Homo sapiens (Human), this protein is Beta-1,4 N-acetylgalactosaminyltransferase 2.